Here is an 82-residue protein sequence, read N- to C-terminus: Small ribosomal subunit protein bS16 (82 aa).

Belongs to the bacterial ribosomal protein bS16 family.

This Clostridium botulinum (strain ATCC 19397 / Type A) protein is Small ribosomal subunit protein bS16.